A 174-amino-acid polypeptide reads, in one-letter code: Ribosome maturation factor RimM (174 aa).

Positions 98 to 172 (AGEYYYHQIV…VVTVELMEGL (75 aa)) constitute a PRC barrel domain.

The protein belongs to the RimM family. Binds ribosomal protein uS19.

The protein resides in the cytoplasm. Functionally, an accessory protein needed during the final step in the assembly of 30S ribosomal subunit, possibly for assembly of the head region. Essential for efficient processing of 16S rRNA. May be needed both before and after RbfA during the maturation of 16S rRNA. It has affinity for free ribosomal 30S subunits but not for 70S ribosomes. The sequence is that of Ribosome maturation factor RimM from Lactiplantibacillus plantarum (strain ATCC BAA-793 / NCIMB 8826 / WCFS1) (Lactobacillus plantarum).